The following is a 282-amino-acid chain: NADPH-dependent 7-cyano-7-deazaguanine reductase (282 aa).

90 to 92 is a binding site for substrate; the sequence is IES. 92–93 lines the NADPH pocket; the sequence is SK. Residue cysteine 190 is the Thioimide intermediate of the active site. The active-site Proton donor is the aspartate 197. 229–230 serves as a coordination point for substrate; it reads HE. 258–259 contacts NADPH; the sequence is RG.

This sequence belongs to the GTP cyclohydrolase I family. QueF type 2 subfamily. In terms of assembly, homodimer.

It is found in the cytoplasm. The catalysed reaction is 7-aminomethyl-7-carbaguanine + 2 NADP(+) = 7-cyano-7-deazaguanine + 2 NADPH + 3 H(+). The protein operates within tRNA modification; tRNA-queuosine biosynthesis. Its function is as follows. Catalyzes the NADPH-dependent reduction of 7-cyano-7-deazaguanine (preQ0) to 7-aminomethyl-7-deazaguanine (preQ1). The polypeptide is NADPH-dependent 7-cyano-7-deazaguanine reductase (Aeromonas salmonicida (strain A449)).